The following is a 437-amino-acid chain: MAISKVYARSVYDSRGNPTVEVEVTTENGTFRSIVPSGASTGVHEALELRDGDKSKWLGKGVTKAVSNVNDIIAPALLSANVDVKDQKAVDALMLTLDGTPNKSKLGANAILGVSMAVAKAAAAEKKVPLYQHLADLAGSSTTPFVLPVPFLNVLNGGSHAGGALALQEFMIAPTGAESFSEALRMGSEVYHNLKSLTKKRYGASAGNVGDEGGVAPNIQTAEEALDLIVDAIKAAGYEGKIDIALDCASSEFFKDGKYDLDFKNPESDSSKWLSGQELADLYKKLVEKYPIVSIEDPFAEDDWEAWSHFYKNAGVQIVADDLTVTNPTRIATAIQKKAADALLLKVNQIGSLTESIQAAKDSFDATWGVMVSHRSGETEDTFIADLVVGLRTGQIKTGAPARSERLAKLNQLLRIEEELGSKAIYAGKKFHNANKL.

The substrate site is built by histidine 160 and glutamate 169. The Proton donor role is filled by glutamate 212. The Mg(2+) site is built by aspartate 247, glutamate 296, and aspartate 321. The substrate site is built by glutamate 296 and aspartate 321. Lysine 346 (proton acceptor) is an active-site residue. Residues 373–376 (SHRS) and lysine 397 contribute to the substrate site.

Belongs to the enolase family. Homodimer. Mg(2+) is required as a cofactor.

It localises to the cytoplasm. It catalyses the reaction (2R)-2-phosphoglycerate = phosphoenolpyruvate + H2O. The protein operates within carbohydrate degradation; glycolysis; pyruvate from D-glyceraldehyde 3-phosphate: step 4/5. The polypeptide is Enolase (ENO) (Eremothecium gossypii (strain ATCC 10895 / CBS 109.51 / FGSC 9923 / NRRL Y-1056) (Yeast)).